Consider the following 422-residue polypeptide: COUP transcription factor 1 (422 aa).

The interval 1-80 is disordered; the sequence is MAMVVSSWRD…QGPPGSGQSQ (80 aa). Positions 39–66 are enriched in low complexity; the sequence is EQQQAGSGAPHTPQTPGQPGAPATPGTQ. The segment at residues 82 to 157 is a DNA-binding region (nuclear receptor); the sequence is HIECVVCGDK…VGMRREAVQR (76 aa). NR C4-type zinc fingers lie at residues 85–105 and 121–145; these read CVVCGDKSSGKHYGQFTCEGC and CRANRNCPIDQHHRNQCQYCRLKKC. The NR LBD domain occupies 183 to 409; that stretch reads YLSGYISLLL…TLIRDMLLSG (227 aa). Positions 343–422 are important for dimerization; the sequence is LQEKSQCALE…NWPYMSIQCS (80 aa).

This sequence belongs to the nuclear hormone receptor family. NR2 subfamily. As to quaternary structure, binds DNA as dimer; homodimer and probable heterodimer with NR2F6. Interacts with GTF2B; this interaction is direct. Interacts with COPS2.

It is found in the nucleus. Coup (chicken ovalbumin upstream promoter) transcription factor binds to the ovalbumin promoter and, in conjunction with another protein (S300-II) stimulates initiation of transcription. Binds to both direct repeats and palindromes of the 5'-AGGTCA-3' motif. Represses transcriptional activity of LHCG. This Mus musculus (Mouse) protein is COUP transcription factor 1 (Nr2f1).